A 162-amino-acid chain; its full sequence is UPF0114 protein VCM66_0196 (162 aa).

4 helical membrane-spanning segments follow: residues 15 to 35 (IMAP…IKFF), 53 to 73 (LILV…IVMV), 109 to 126 (VSAS…KVFM), and 136 to 156 (IKWY…MGYL).

This sequence belongs to the UPF0114 family.

The protein resides in the cell membrane. The protein is UPF0114 protein VCM66_0196 of Vibrio cholerae serotype O1 (strain M66-2).